The sequence spans 64 residues: Large ribosomal subunit protein bL35 (64 aa).

The span at methionine 1–arginine 45 shows a compositional bias: basic residues. Positions methionine 1–proline 64 are disordered.

Belongs to the bacterial ribosomal protein bL35 family.

This chain is Large ribosomal subunit protein bL35, found in Natranaerobius thermophilus (strain ATCC BAA-1301 / DSM 18059 / JW/NM-WN-LF).